A 305-amino-acid chain; its full sequence is Oxygen-dependent coproporphyrinogen-III oxidase (305 aa).

Ser-93 is a substrate binding site. Residues His-97 and His-107 each coordinate a divalent metal cation. The Proton donor role is filled by His-107. 109 to 111 (NVR) is a substrate binding site. 2 residues coordinate a divalent metal cation: His-146 and His-176. The segment at 241-276 (YVEFNLVFDRGTLFGLQSGGRTESILMSLPPQVRWG) is important for dimerization. 259 to 261 (GGR) contacts substrate.

It belongs to the aerobic coproporphyrinogen-III oxidase family. Homodimer. Requires a divalent metal cation as cofactor.

Its subcellular location is the cytoplasm. The enzyme catalyses coproporphyrinogen III + O2 + 2 H(+) = protoporphyrinogen IX + 2 CO2 + 2 H2O. It functions in the pathway porphyrin-containing compound metabolism; protoporphyrin-IX biosynthesis; protoporphyrinogen-IX from coproporphyrinogen-III (O2 route): step 1/1. Functionally, involved in the heme biosynthesis. Catalyzes the aerobic oxidative decarboxylation of propionate groups of rings A and B of coproporphyrinogen-III to yield the vinyl groups in protoporphyrinogen-IX. This Pseudomonas paraeruginosa (strain DSM 24068 / PA7) (Pseudomonas aeruginosa (strain PA7)) protein is Oxygen-dependent coproporphyrinogen-III oxidase.